A 501-amino-acid chain; its full sequence is Cytochrome P450 4d2 (501 aa).

Heme-binding residues include glutamate 311 and cysteine 449.

Belongs to the cytochrome P450 family. Requires heme as cofactor.

Its subcellular location is the endoplasmic reticulum membrane. It is found in the microsome membrane. Functionally, involved in the metabolism of insect hormones and in the breakdown of synthetic insecticides. This Drosophila melanogaster (Fruit fly) protein is Cytochrome P450 4d2 (Cyp4d2).